A 356-amino-acid chain; its full sequence is tRNA N6-adenosine threonylcarbamoyltransferase (356 aa).

2 residues coordinate Fe cation: His114 and His118. Residues Leu136–Gly140, Asp169, Gly182, and Asn280 contribute to the substrate site. Residue Asp308 coordinates Fe cation. Residues Ala333–Ala356 form a disordered region.

The protein belongs to the KAE1 / TsaD family. Fe(2+) is required as a cofactor.

Its subcellular location is the cytoplasm. The catalysed reaction is L-threonylcarbamoyladenylate + adenosine(37) in tRNA = N(6)-L-threonylcarbamoyladenosine(37) in tRNA + AMP + H(+). Its function is as follows. Required for the formation of a threonylcarbamoyl group on adenosine at position 37 (t(6)A37) in tRNAs that read codons beginning with adenine. Is involved in the transfer of the threonylcarbamoyl moiety of threonylcarbamoyl-AMP (TC-AMP) to the N6 group of A37, together with TsaE and TsaB. TsaD likely plays a direct catalytic role in this reaction. In Dinoroseobacter shibae (strain DSM 16493 / NCIMB 14021 / DFL 12), this protein is tRNA N6-adenosine threonylcarbamoyltransferase.